Here is a 388-residue protein sequence, read N- to C-terminus: Succinate--CoA ligase [ADP-forming] subunit beta (388 aa).

The ATP-grasp domain occupies lysine 9–glutamate 244. ATP-binding positions include lysine 46, glycine 53–glycine 55, glutamate 99, alanine 102, and glutamate 107. Positions 199 and 213 each coordinate Mg(2+). Substrate-binding positions include asparagine 264 and glycine 321–methionine 323.

It belongs to the succinate/malate CoA ligase beta subunit family. Heterotetramer of two alpha and two beta subunits. The cofactor is Mg(2+).

It carries out the reaction succinate + ATP + CoA = succinyl-CoA + ADP + phosphate. It catalyses the reaction GTP + succinate + CoA = succinyl-CoA + GDP + phosphate. The protein operates within carbohydrate metabolism; tricarboxylic acid cycle; succinate from succinyl-CoA (ligase route): step 1/1. Functionally, succinyl-CoA synthetase functions in the citric acid cycle (TCA), coupling the hydrolysis of succinyl-CoA to the synthesis of either ATP or GTP and thus represents the only step of substrate-level phosphorylation in the TCA. The beta subunit provides nucleotide specificity of the enzyme and binds the substrate succinate, while the binding sites for coenzyme A and phosphate are found in the alpha subunit. The chain is Succinate--CoA ligase [ADP-forming] subunit beta from Albidiferax ferrireducens (strain ATCC BAA-621 / DSM 15236 / T118) (Rhodoferax ferrireducens).